The primary structure comprises 708 residues: Glycine--tRNA ligase beta subunit (708 aa).

This sequence belongs to the class-II aminoacyl-tRNA synthetase family. As to quaternary structure, tetramer of two alpha and two beta subunits.

It is found in the cytoplasm. It catalyses the reaction tRNA(Gly) + glycine + ATP = glycyl-tRNA(Gly) + AMP + diphosphate. This Methylobacillus flagellatus (strain ATCC 51484 / DSM 6875 / VKM B-1610 / KT) protein is Glycine--tRNA ligase beta subunit.